Here is a 175-residue protein sequence, read N- to C-terminus: ATP synthase subunit b (175 aa).

The chain crosses the membrane as a helical span at residues Val-18–Leu-38.

The protein belongs to the ATPase B chain family. F-type ATPases have 2 components, F(1) - the catalytic core - and F(0) - the membrane proton channel. F(1) has five subunits: alpha(3), beta(3), gamma(1), delta(1), epsilon(1). F(0) has three main subunits: a(1), b(2) and c(10-14). The alpha and beta chains form an alternating ring which encloses part of the gamma chain. F(1) is attached to F(0) by a central stalk formed by the gamma and epsilon chains, while a peripheral stalk is formed by the delta and b chains.

The protein resides in the cell inner membrane. Functionally, f(1)F(0) ATP synthase produces ATP from ADP in the presence of a proton or sodium gradient. F-type ATPases consist of two structural domains, F(1) containing the extramembraneous catalytic core and F(0) containing the membrane proton channel, linked together by a central stalk and a peripheral stalk. During catalysis, ATP synthesis in the catalytic domain of F(1) is coupled via a rotary mechanism of the central stalk subunits to proton translocation. Component of the F(0) channel, it forms part of the peripheral stalk, linking F(1) to F(0). This chain is ATP synthase subunit b, found in Akkermansia muciniphila (strain ATCC BAA-835 / DSM 22959 / JCM 33894 / BCRC 81048 / CCUG 64013 / CIP 107961 / Muc).